A 112-amino-acid polypeptide reads, in one-letter code: Large ribosomal subunit protein P1w (112 aa).

The segment at 85–112 is disordered; that stretch reads AAAPAAEEKKKDEPAEESDGDLGFGLFD. A Phosphoserine modification is found at Ser-102.

Belongs to the eukaryotic ribosomal protein P1/P2 family. As to quaternary structure, P1 and P2 exist as dimers at the large ribosomal subunit.

In terms of biological role, plays an important role in the elongation step of protein synthesis. This Arabidopsis thaliana (Mouse-ear cress) protein is Large ribosomal subunit protein P1w (RPP1A).